The sequence spans 360 residues: Phospho-N-acetylmuramoyl-pentapeptide-transferase (360 aa).

10 helical membrane-spanning segments follow: residues 27 to 47, 73 to 93, 97 to 117, 145 to 165, 168 to 188, 199 to 219, 236 to 256, 263 to 283, 288 to 308, and 337 to 357; these read ILGVLTALAISLLVGNKVIVL, TMGGALIIFSISVSTLLWGDL, YVWVVLLVMLAFGVVGWVDDY, AFYLYYTASTPAETALIVPLF, VAIPLGMFFIVLTYFVIVGTS, GLAILPTVLVGGALGVFAYLT, SGELLVFCAALAGAGLGFLWF, IFMGDVGSLALGAALGTIAVI, LVLFIMGGVFVMETVSVILQV, and KVIVRFWIITVCLVLVGFATL.

This sequence belongs to the glycosyltransferase 4 family. MraY subfamily. Requires Mg(2+) as cofactor.

It is found in the cell inner membrane. The catalysed reaction is UDP-N-acetyl-alpha-D-muramoyl-L-alanyl-gamma-D-glutamyl-meso-2,6-diaminopimeloyl-D-alanyl-D-alanine + di-trans,octa-cis-undecaprenyl phosphate = di-trans,octa-cis-undecaprenyl diphospho-N-acetyl-alpha-D-muramoyl-L-alanyl-D-glutamyl-meso-2,6-diaminopimeloyl-D-alanyl-D-alanine + UMP. Its pathway is cell wall biogenesis; peptidoglycan biosynthesis. Its function is as follows. Catalyzes the initial step of the lipid cycle reactions in the biosynthesis of the cell wall peptidoglycan: transfers peptidoglycan precursor phospho-MurNAc-pentapeptide from UDP-MurNAc-pentapeptide onto the lipid carrier undecaprenyl phosphate, yielding undecaprenyl-pyrophosphoryl-MurNAc-pentapeptide, known as lipid I. The polypeptide is Phospho-N-acetylmuramoyl-pentapeptide-transferase (Marinomonas sp. (strain MWYL1)).